The chain runs to 370 residues: Putative agmatine deiminase (370 aa).

Cysteine 361 functions as the Amidino-cysteine intermediate in the catalytic mechanism.

This sequence belongs to the agmatine deiminase family.

The enzyme catalyses agmatine + H2O = N-carbamoylputrescine + NH4(+). This is Putative agmatine deiminase from Shewanella baltica (strain OS195).